The chain runs to 218 residues: Probable nicotinate-nucleotide adenylyltransferase (218 aa).

This sequence belongs to the NadD family.

It carries out the reaction nicotinate beta-D-ribonucleotide + ATP + H(+) = deamido-NAD(+) + diphosphate. The protein operates within cofactor biosynthesis; NAD(+) biosynthesis; deamido-NAD(+) from nicotinate D-ribonucleotide: step 1/1. Functionally, catalyzes the reversible adenylation of nicotinate mononucleotide (NaMN) to nicotinic acid adenine dinucleotide (NaAD). The polypeptide is Probable nicotinate-nucleotide adenylyltransferase (Burkholderia cenocepacia (strain ATCC BAA-245 / DSM 16553 / LMG 16656 / NCTC 13227 / J2315 / CF5610) (Burkholderia cepacia (strain J2315))).